The primary structure comprises 497 residues: Guanosine-5'-triphosphate,3'-diphosphate pyrophosphatase (497 aa).

This sequence belongs to the GppA/Ppx family. GppA subfamily.

The catalysed reaction is guanosine 3'-diphosphate 5'-triphosphate + H2O = guanosine 3',5'-bis(diphosphate) + phosphate + H(+). It functions in the pathway purine metabolism; ppGpp biosynthesis; ppGpp from GTP: step 2/2. In terms of biological role, catalyzes the conversion of pppGpp to ppGpp. Guanosine pentaphosphate (pppGpp) is a cytoplasmic signaling molecule which together with ppGpp controls the 'stringent response', an adaptive process that allows bacteria to respond to amino acid starvation, resulting in the coordinated regulation of numerous cellular activities. The protein is Guanosine-5'-triphosphate,3'-diphosphate pyrophosphatase of Vibrio cholerae serotype O1 (strain ATCC 39541 / Classical Ogawa 395 / O395).